The chain runs to 930 residues: Translation initiation factor IF-2 (930 aa).

Low complexity predominate over residues 50–67; the sequence is FKPAAAPKVEAKPAAPKV. Disordered stretches follow at residues 50–196 and 260–346; these read FKPA…RIDF and EVVP…HELP. Basic and acidic residues-rich tracts occupy residues 68 to 90 and 110 to 125; these read SAEK…EAKP and FKAE…AERR. Residues 129 to 141 are compositionally biased toward low complexity; the sequence is KGNNRDQQQNGNR. Basic and acidic residues-rich tracts occupy residues 157–172 and 262–295; these read RDNR…EQGQ and VPEK…DGPR. Residues 309-318 are compositionally biased toward low complexity; sequence NQKNSNWNNN. Basic and acidic residues predominate over residues 337–346; that stretch reads VTERKFHELP. The region spanning 432–599 is the tr-type G domain; the sequence is ERPPVVTIMG…TVLLVAEIQE (168 aa). A G1 region spans residues 441-448; sequence GHVDHGKT. 441–448 is a GTP binding site; the sequence is GHVDHGKT. Positions 466-470 are G2; it reads GITQH. Residues 487–490 form a G3 region; sequence DTPG. GTP-binding positions include 487-491 and 541-544; these read DTPGH and NKID. Residues 541–544 are G4; the sequence is NKID. The segment at 577–579 is G5; that stretch reads SAK.

It belongs to the TRAFAC class translation factor GTPase superfamily. Classic translation factor GTPase family. IF-2 subfamily.

It localises to the cytoplasm. In terms of biological role, one of the essential components for the initiation of protein synthesis. Protects formylmethionyl-tRNA from spontaneous hydrolysis and promotes its binding to the 30S ribosomal subunits. Also involved in the hydrolysis of GTP during the formation of the 70S ribosomal complex. The sequence is that of Translation initiation factor IF-2 from Streptococcus pneumoniae serotype 19F (strain G54).